The sequence spans 166 residues: Minor capsid protein VP2 (166 aa).

The disordered stretch occupies residues 138 to 166 (PAPSGFVNPNYQPSPPRLKLGPRPPSTNV). The segment covering 149 to 166 (QPSPPRLKLGPRPPSTNV) has biased composition (pro residues).

This sequence belongs to the vesivirus VP2 protein family. As to quaternary structure, homooligomer. The portal-like structure consists in 12 copies of VP2. Interacts with capsid protein VP1.

It localises to the virion. The protein localises to the host cytoplasm. In terms of biological role, minor structural protein that forms a portal-like structure at a unique three-fold axis of symmetry, following binding to the host receptor. The channel formed by VP2 may allow the delivery of the viral genome through the host endosomal membrane. The protein is Minor capsid protein VP2 of Homo sapiens (Human).